A 995-amino-acid chain; its full sequence is DNA polymerase (995 aa).

Belongs to the DNA polymerase type-B family.

The enzyme catalyses DNA(n) + a 2'-deoxyribonucleoside 5'-triphosphate = DNA(n+1) + diphosphate. This chain is DNA polymerase (RF1), found in Kluyveromyces lactis (strain ATCC 8585 / CBS 2359 / DSM 70799 / NBRC 1267 / NRRL Y-1140 / WM37) (Yeast).